Consider the following 338-residue polypeptide: Ferredoxin--NADP reductase (338 aa).

Asp36, Gln44, Tyr49, Val89, Phe123, Asp290, and Thr331 together coordinate FAD.

The protein belongs to the ferredoxin--NADP reductase type 2 family. In terms of assembly, homodimer. FAD is required as a cofactor.

The enzyme catalyses 2 reduced [2Fe-2S]-[ferredoxin] + NADP(+) + H(+) = 2 oxidized [2Fe-2S]-[ferredoxin] + NADPH. This chain is Ferredoxin--NADP reductase, found in Anaplasma phagocytophilum (strain HZ).